Here is a 322-residue protein sequence, read N- to C-terminus: 26S proteasome non-ATPase regulatory subunit 7 (322 aa).

In terms of domain architecture, MPN spans 9–144 (VVVHPLVLLS…TEAYISVEEV (136 aa)). A Glycyl lysine isopeptide (Lys-Gly) (interchain with G-Cter in ubiquitin) cross-link involves residue lysine 180. 4 positions are modified to N6-acetyllysine: lysine 204, lysine 214, lysine 314, and lysine 315. A disordered region spans residues 281–322 (ANRDAEKKEGQEKEDSKKDRKDDKEKEKEKSDVKKEEKKEKK).

The protein belongs to the peptidase M67A family. As to quaternary structure, component of the 19S proteasome regulatory particle complex. The 26S proteasome consists of a 20S core particle (CP) and two 19S regulatory subunits (RP). The regulatory particle is made of a lid composed of 9 subunits including PSMD7, a base containing 6 ATPases and few additional components. Within the complex, PSMD7 interacts with subunit PSMD4 through their respective MPN domain. Interacts with TRIM5.

In terms of biological role, component of the 26S proteasome, a multiprotein complex involved in the ATP-dependent degradation of ubiquitinated proteins. This complex plays a key role in the maintenance of protein homeostasis by removing misfolded or damaged proteins, which could impair cellular functions, and by removing proteins whose functions are no longer required. Therefore, the proteasome participates in numerous cellular processes, including cell cycle progression, apoptosis, or DNA damage repair. In Bos taurus (Bovine), this protein is 26S proteasome non-ATPase regulatory subunit 7 (PSMD7).